Consider the following 224-residue polypeptide: UPF0758 protein PBPRA0202 (224 aa).

The MPN domain occupies 102 to 224 (VLTSPQHTRH…IVSFSEQGWL (123 aa)). Zn(2+)-binding residues include His173, His175, and Asp186. A JAMM motif motif is present at residues 173–186 (HNHPSGVAEPSQSD).

This sequence belongs to the UPF0758 family.

The protein is UPF0758 protein PBPRA0202 of Photobacterium profundum (strain SS9).